Reading from the N-terminus, the 421-residue chain is L-evernosamine nitrososynthase (421 aa).

This sequence belongs to the acyl-CoA dehydrogenase family. As to quaternary structure, homotetramer. The cofactor is FAD.

It carries out the reaction dTDP-beta-L-evernosamine + 2 NADPH + 2 O2 + H(+) = dTDP-2,3,6-trideoxy-3-C-methyl-4-O-methyl-3-nitroso-beta-L-arabino-hexopyranose + 2 NADP(+) + 3 H2O. It catalyses the reaction dTDP-beta-L-evernosamine + NADPH + O2 = dTDP-N-hydroxy-beta-L-evernosamine + NADP(+) + H2O. The enzyme catalyses dTDP-N-hydroxy-beta-L-evernosamine + NADPH + O2 + H(+) = dTDP-2,3,6-trideoxy-3-C-methyl-4-O-methyl-3-nitroso-beta-L-arabino-hexopyranose + NADP(+) + 2 H2O. It functions in the pathway antibiotic biosynthesis. Functionally, nitrososynthase involved in the biosynthesis of everninomicin, a broad spectrum orthosomycin antibiotic. Catalyzes the double-oxidation of TDP-L-evernosamine to TDP-L-evernitrosose. The enzyme first oxidizes the substrate to a transient hydroxylamino intermediate, which is then further oxidized to nitroso sugar. The nitroso group is probably spontaneously oxidized giving TDP-L-evernitrose. In vitro, catalyzes the double-oxidation of TDP-L-epi-vancosamine to TDP-L-epi-vancosonitrose. Can also use biosynthetic progenitors of TDP-L-epi-vancosamine, but progenitors solely undergo single-oxidation reactions and terminate in the hydroxylamine oxidation state. This chain is L-evernosamine nitrososynthase, found in Micromonospora sp. (strain ATCC 39149 / NRRL 15099 / SCC 1413).